The primary structure comprises 202 residues: Imidazoleglycerol-phosphate dehydratase (202 aa).

This sequence belongs to the imidazoleglycerol-phosphate dehydratase family.

It localises to the cytoplasm. It catalyses the reaction D-erythro-1-(imidazol-4-yl)glycerol 3-phosphate = 3-(imidazol-4-yl)-2-oxopropyl phosphate + H2O. Its pathway is amino-acid biosynthesis; L-histidine biosynthesis; L-histidine from 5-phospho-alpha-D-ribose 1-diphosphate: step 6/9. In Corynebacterium efficiens (strain DSM 44549 / YS-314 / AJ 12310 / JCM 11189 / NBRC 100395), this protein is Imidazoleglycerol-phosphate dehydratase.